A 200-amino-acid chain; its full sequence is Orotate phosphoribosyltransferase (200 aa).

5-phospho-alpha-D-ribose 1-diphosphate contacts are provided by residues Arg95, Lys99, His101, and 121-129; that span reads DDVATTGGS. Orotate contacts are provided by Thr125 and Arg153.

This sequence belongs to the purine/pyrimidine phosphoribosyltransferase family. PyrE subfamily. Homodimer. Requires Mg(2+) as cofactor.

The catalysed reaction is orotidine 5'-phosphate + diphosphate = orotate + 5-phospho-alpha-D-ribose 1-diphosphate. The protein operates within pyrimidine metabolism; UMP biosynthesis via de novo pathway; UMP from orotate: step 1/2. Its function is as follows. Catalyzes the transfer of a ribosyl phosphate group from 5-phosphoribose 1-diphosphate to orotate, leading to the formation of orotidine monophosphate (OMP). The chain is Orotate phosphoribosyltransferase from Cenarchaeum symbiosum (strain A).